Consider the following 207-residue polypeptide: High frequency lysogenization protein HflD homolog (207 aa).

It belongs to the HflD family.

Its subcellular location is the cytoplasm. It is found in the cell inner membrane. The sequence is that of High frequency lysogenization protein HflD homolog from Azotobacter vinelandii (strain DJ / ATCC BAA-1303).